Here is a 493-residue protein sequence, read N- to C-terminus: MDASAEQSLPEPGSQDSVAGDDIEIVVNVGGVRQVLYGDLLSQYPETRLAELINCLAGGYDTIFSLCDDYDPGKREFYFDRDPDAFKCVIEVYYFGEVHMKKGICPICFKNEMDFWKVDLKFLDDCCKSHLSEKREELEEIARRVQLILDDLGVDAAEGRWRRCQKCVWKFLEKPESSCPARVVAVLSFLLILVSSVVMCMGTIPELQVVDSEGNRVEHPTLENVETACIGWFTLEYLLRLFSSPNKLHFALSFMNIVDVLAILPFYVSLTLTHLGARMMELTNVQQAVQALRIMRIARIFKLARHSSGLQTLTYALKRSFKELGLLLMYLAVGIFVFSALGYTMEQSHPETLFKSIPQSFWWAIITMTTVGYGDIYPKTTLGKLNAAISFLCGVIAIALPIHPIINNFVRYYNKQRVLETAAKHELELMELNSSSAESKPGGSRSDLDTLPPEPAAREGPSWGSRLKLSHSDTFIPLLTEEKHHRTRLQSCK.

The Cytoplasmic segment spans residues 1–183 (MDASAEQSLP…KPESSCPARV (183 aa)). The chain crosses the membrane as a helical span at residues 184 to 204 (VAVLSFLLILVSSVVMCMGTI). The Extracellular segment spans residues 205–223 (PELQVVDSEGNRVEHPTLE). A helical transmembrane segment spans residues 224 to 244 (NVETACIGWFTLEYLLRLFSS). The Cytoplasmic segment spans residues 245–249 (PNKLH). The chain crosses the membrane as a helical span at residues 250-270 (FALSFMNIVDVLAILPFYVSL). Residues 271-289 (TLTHLGARMMELTNVQQAV) lie on the Extracellular side of the membrane. Residues 290-310 (QALRIMRIARIFKLARHSSGL) form a helical; Voltage-sensor membrane-spanning segment. Over 311 to 324 (QTLTYALKRSFKEL) the chain is Cytoplasmic. The chain crosses the membrane as a helical span at residues 325–345 (GLLLMYLAVGIFVFSALGYTM). Residues 346 to 357 (EQSHPETLFKSI) lie on the Extracellular side of the membrane. Residues 358 to 378 (PQSFWWAIITMTTVGYGDIYP) constitute an intramembrane region (pore-forming). Residues 370–375 (TVGYGD) carry the Selectivity filter motif. Topologically, residues 379-385 (KTTLGKL) are extracellular. Residues 386–406 (NAAISFLCGVIAIALPIHPII) traverse the membrane as a helical segment. At 407 to 493 (NNFVRYYNKQ…HHRTRLQSCK (87 aa)) the chain is on the cytoplasmic side. The interval 433–468 (NSSSAESKPGGSRSDLDTLPPEPAAREGPSWGSRLK) is disordered.

It belongs to the potassium channel family. F (TC 1.A.1.2) subfamily. Kv5.1/KCNF1 sub-subfamily. In terms of assembly, heterotetramer with KCNB1 or KCNB2. In terms of tissue distribution, expressed in brain namely in the piriform cortex, olfactory tubercle, and medial habenular nucleus. Also expressed in the medial amygdaloid nuclei and the lateral amygdaloid area.

The protein localises to the cell membrane. Functionally, regulatory alpha-subunit of the voltage-gated potassium (Kv) channel which, when coassembled with KCNB1 or KCNB2, can modulate their expression and their gating kinetics by acting on deactivation upon repolarization and inactivation during maintained depolarization. Accelerates inactivation but has relatively little effect on deactivation. Coexpression with KCNB1 or KCNB2 markedly slows inactivation. Each modulatory subunit has its own specific properties of regulation, and can lead to extensive inhibitions, to large changes in kinetics, and/or to large shifts in the voltage dependencies of the inactivation process. The gating kinetics depends on the nature and stoichiometry of the associated regulatory sunbunit. Fails to produce a potassium current when expressed alone. In Rattus norvegicus (Rat), this protein is Voltage-gated potassium channel regulatory subunit KCNF1.